We begin with the raw amino-acid sequence, 295 residues long: MEKMSRPLPLNPTFIPPPYGVLRSLLENPLKLPLHHEDAFSKDKDKEKKLDDESNSPTVPQSAFLGPTLWDKTLPYDGDTFQLEYMDLEEFLSENGIPPSPSQHDHSPHPPGLQPASSAAPSVMDLSSRASAPLHPGIPSPNCMQSPIRPGQLLPANRNTPSPIDPDTIQVPVGYEPDPADLALSSIPGQEMFDPRKRKFSEEELKPQPMIKKARKVFIPDDLKDDKYWARRRKNNMAAKRSRDARRLKENQIAIRASFLEKENSALRQEVADLRKELGKCKNILAKYEARHGPL.

Residues 37–52 (EDAFSKDKDKEKKLDD) are compositionally biased toward basic and acidic residues. Disordered regions lie at residues 37-70 (EDAF…PTLW) and 93-167 (SENG…IDPD). The 64-residue stretch at 225-288 (DDKYWARRRK…GKCKNILAKY (64 aa)) folds into the bZIP domain. Residues 227–247 (KYWARRRKNNMAAKRSRDARR) form a basic motif region. Residues 248-255 (LKENQIAI) form a leucine-zipper region.

This sequence belongs to the bZIP family. PAR subfamily. As to quaternary structure, binds DNA specifically as homodimer or heterodimer with other PAR factors. As to expression, highly expressed in liver; lower levels in lung and kidney.

The protein localises to the nucleus. The sequence is that of Hepatic leukemia factor (HLF) from Homo sapiens (Human).